A 380-amino-acid polypeptide reads, in one-letter code: 3-dehydroquinate synthase (380 aa).

Residues 100–104, 124–125, Lys137, and Lys146 contribute to the NAD(+) site; these read GAASD and TT. Residues Glu179, His251, and His267 each coordinate Zn(2+).

The protein belongs to the sugar phosphate cyclases superfamily. Dehydroquinate synthase family. Requires NAD(+) as cofactor. It depends on Co(2+) as a cofactor. Zn(2+) is required as a cofactor.

It localises to the cytoplasm. The enzyme catalyses 7-phospho-2-dehydro-3-deoxy-D-arabino-heptonate = 3-dehydroquinate + phosphate. Its pathway is metabolic intermediate biosynthesis; chorismate biosynthesis; chorismate from D-erythrose 4-phosphate and phosphoenolpyruvate: step 2/7. Catalyzes the conversion of 3-deoxy-D-arabino-heptulosonate 7-phosphate (DAHP) to dehydroquinate (DHQ). This Tropheryma whipplei (strain TW08/27) (Whipple's bacillus) protein is 3-dehydroquinate synthase.